Reading from the N-terminus, the 118-residue chain is UPF0102 protein lpg2994 (118 aa).

It belongs to the UPF0102 family.

The chain is UPF0102 protein lpg2994 from Legionella pneumophila subsp. pneumophila (strain Philadelphia 1 / ATCC 33152 / DSM 7513).